Here is a 435-residue protein sequence, read N- to C-terminus: NADH-quinone oxidoreductase subunit D (435 aa).

This sequence belongs to the complex I 49 kDa subunit family. In terms of assembly, NDH-1 is composed of 14 different subunits. Subunits NuoB, C, D, E, F, and G constitute the peripheral sector of the complex.

Its subcellular location is the cell inner membrane. The enzyme catalyses a quinone + NADH + 5 H(+)(in) = a quinol + NAD(+) + 4 H(+)(out). NDH-1 shuttles electrons from NADH, via FMN and iron-sulfur (Fe-S) centers, to quinones in the respiratory chain. The immediate electron acceptor for the enzyme in this species is believed to be ubiquinone. Couples the redox reaction to proton translocation (for every two electrons transferred, four hydrogen ions are translocated across the cytoplasmic membrane), and thus conserves the redox energy in a proton gradient. The chain is NADH-quinone oxidoreductase subunit D from Xylella fastidiosa (strain M23).